A 384-amino-acid polypeptide reads, in one-letter code: Dehydrogenase ALT3 (384 aa).

The protein belongs to the iron-containing alcohol dehydrogenase family. The cofactor is Fe cation.

It participates in mycotoxin biosynthesis. Dehydrogenase; part of the gene cluster that mediates the biosynthesis of the host-selective toxins (HSTs) AAL-toxins, sphinganine-analog mycotoxins responsible for Alternaria stem canker on tomato by the tomato pathotype. The biosynthesis starts with the polyketide synthase ALT1-catalyzed C-16 carbon chain assembly from one starter acetyl-CoA unit with malonyl-CoA extender units. ALT1 also selectively transfers methyl groups at the first and the third cycle of chain elongation for AAL toxin. The C-16 polyketide chain is released from the enzyme by a nucleophilic attack of a carbanion, which is derived from R-carbon of glycin by decarboxylation, on the carbonyl carbon of polyketide acyl chain. This step is probably catalyzed by a pyridoxal 5'-phosphate-dependent aminoacyl transferase ALT4. The respective functions of the other enzymes encoded by the cluster have still to be elucidated. The sphingosine N-acyltransferase-like protein ALT7 seems not to act as a resistance/self-tolerance factor against the toxin in the toxin biosynthetic gene cluster, contrary to what is expected. The protein is Dehydrogenase ALT3 of Alternaria alternata (Alternaria rot fungus).